Here is a 534-residue protein sequence, read N- to C-terminus: MVQRWLYSTNAKDIAVLYFMLAIFSGMAGTAMSLIIRLELAAPGSQYLQGNAQLFNVLVVGHAVLMIFFLVMPALIGGFGNYLLPLMIGATDTAFPRINNIAFWVLPMGLVCLVTSTLVESGAGTGWTVYPPLSSIQAHSGPSVDLAIFALHLTSISSLLGAINFIVTTLNMRTNGMTMHKLPLFVWSIFITAFLLLLSLPVLSAGITMLLLDRNFNTSFFEVAGGGDPILYEHLFYFFGHPEVYILIIPGFGIISHVVSTYSKKPVFGEISMVYAMASIGLLGFLVWSHHMYIVGLDADTRAYFTSATMIIAIPTGIKIFSWLATIYGGSIRLATPMLYAIAFLFLFTMGGLTGVALANASLDVAFHDTYYVVGHFHYVLSMGAIFSLFAGYYYWSPQILGLNYNEKLAQIQFWLIFIGANVIFFPMHFLGINGMPRRIPDYPDAFAGWNYVASIGSFIATLSLFLFIYILYDQLVNGLNNKVNNKSVIYTKAPDFVESNTIFNLNTVKSSSIEFLLTSPPAVHSFNTPAVQS.

The chain crosses the membrane as a helical span at residues valine 16–isoleucine 36. Ca(2+) is bound by residues glutamate 39, alanine 42, and glycine 44. Helical transmembrane passes span valine 57–glycine 77, isoleucine 101–serine 121, alanine 147–valine 167, leucine 182–valine 202, leucine 235–isoleucine 255, and valine 267–valine 287. A Fe(II)-heme a-binding site is contributed by histidine 62. Cu cation is bound at residue histidine 241. Residues histidine 241–tyrosine 245 constitute a cross-link (1'-histidyl-3'-tyrosine (His-Tyr)). Tyrosine 245 is an O2 binding site. Cu cation is bound by residues histidine 290 and histidine 291. 2 consecutive transmembrane segments (helical) span residues methionine 310 to glycine 330 and methionine 338 to leucine 358. Residues histidine 368 and aspartate 369 each contribute to the Mg(2+) site. The next 2 helical transmembrane spans lie at tyrosine 372–glycine 392 and phenylalanine 414–asparagine 434. Residue histidine 376 participates in heme a3 binding. Histidine 378 contributes to the Fe(II)-heme a binding site. A Ca(2+)-binding site is contributed by proline 441. A helical membrane pass occupies residues tyrosine 452–leucine 472.

It belongs to the heme-copper respiratory oxidase family. Component of the cytochrome c oxidase (complex IV, CIV), a multisubunit enzyme composed of a catalytic core of 3 subunits and several supernumerary subunits. The complex exists as a monomer or a dimer and forms supercomplexes (SCs) in the inner mitochondrial membrane with ubiquinol-cytochrome c oxidoreductase (cytochrome b-c1 complex, complex III, CIII). The cofactor is heme. Cu cation is required as a cofactor.

Its subcellular location is the mitochondrion inner membrane. It catalyses the reaction 4 Fe(II)-[cytochrome c] + O2 + 8 H(+)(in) = 4 Fe(III)-[cytochrome c] + 2 H2O + 4 H(+)(out). The protein operates within energy metabolism; oxidative phosphorylation. In terms of biological role, component of the cytochrome c oxidase, the last enzyme in the mitochondrial electron transport chain which drives oxidative phosphorylation. The respiratory chain contains 3 multisubunit complexes succinate dehydrogenase (complex II, CII), ubiquinol-cytochrome c oxidoreductase (cytochrome b-c1 complex, complex III, CIII) and cytochrome c oxidase (complex IV, CIV), that cooperate to transfer electrons derived from NADH and succinate to molecular oxygen, creating an electrochemical gradient over the inner membrane that drives transmembrane transport and the ATP synthase. Cytochrome c oxidase is the component of the respiratory chain that catalyzes the reduction of oxygen to water. Electrons originating from reduced cytochrome c in the intermembrane space (IMS) are transferred via the dinuclear copper A center (CU(A)) of subunit 2 and heme A of subunit 1 to the active site in subunit 1, a binuclear center (BNC) formed by heme A3 and copper B (CU(B)). The BNC reduces molecular oxygen to 2 water molecules using 4 electrons from cytochrome c in the IMS and 4 protons from the mitochondrial matrix. The polypeptide is Cytochrome c oxidase subunit 1 (COXI) (Saccharomyces paradoxus (Yeast)).